Reading from the N-terminus, the 107-residue chain is MEKRRAEIAAAIITAPTILAMMSTVLRALIFSSCIKNFLIFSMLKHSSYCLAILVYQKNRKAVMWGSDLFYHLRGFSSIFEQKTYIYESILSLQRKNRVRFKLPRII.

A helical membrane pass occupies residues 9 to 31 (AAAIITAPTILAMMSTVLRALIF).

Its subcellular location is the membrane. This is an uncharacterized protein from Archaeoglobus fulgidus (strain ATCC 49558 / DSM 4304 / JCM 9628 / NBRC 100126 / VC-16).